Reading from the N-terminus, the 100-residue chain is Spleen trypsin inhibitor I (100 aa).

The N-terminal stretch at 1-21 (MKMSRLCLSIALLVLLGTLAA) is a signal peptide. The propeptide occupies 22–33 (STPGCDTSNQAK). In terms of domain architecture, BPTI/Kunitz inhibitor spans 40–90 (CLEPPYTGPCKAKMIRYFYNAKAGFCETFVYGGCKAKSNNFRSAEDCMRTC). Cystine bridges form between cysteine 40–cysteine 90, cysteine 49–cysteine 73, and cysteine 65–cysteine 86. A propeptide is located at residue leucine 100.

It localises to the secreted. This Bos taurus (Bovine) protein is Spleen trypsin inhibitor I.